A 251-amino-acid chain; its full sequence is Triosephosphate isomerase (251 aa).

9 to 11 contacts substrate; it reads NWK. Residue H95 is the Electrophile of the active site. Residue E167 is the Proton acceptor of the active site. Substrate is bound by residues G173, S212, and 233-234; that span reads GG.

Belongs to the triosephosphate isomerase family. Homodimer.

The protein localises to the cytoplasm. It carries out the reaction D-glyceraldehyde 3-phosphate = dihydroxyacetone phosphate. It participates in carbohydrate biosynthesis; gluconeogenesis. The protein operates within carbohydrate degradation; glycolysis; D-glyceraldehyde 3-phosphate from glycerone phosphate: step 1/1. Involved in the gluconeogenesis. Catalyzes stereospecifically the conversion of dihydroxyacetone phosphate (DHAP) to D-glyceraldehyde-3-phosphate (G3P). The sequence is that of Triosephosphate isomerase from Pseudomonas aeruginosa (strain LESB58).